The sequence spans 1067 residues: Sal-like protein 4 (1067 aa).

A disordered region spans residues methionine 1–proline 62. Residues glutamate 15–proline 42 are compositionally biased toward low complexity. The residue at position 53 (serine 53) is a Phosphoserine. A C2H2-type 1; atypical zinc finger spans residues histidine 68–cysteine 90. Residues alanine 115 to lysine 140 form a disordered region. The span at glutamine 119–glycine 137 shows a compositional bias: polar residues. A Glycyl lysine isopeptide (Lys-Gly) (interchain with G-Cter in SUMO1); alternate cross-link involves residue lysine 151. Lysine 151 participates in a covalent cross-link: Glycyl lysine isopeptide (Lys-Gly) (interchain with G-Cter in SUMO2); alternate. Glycyl lysine isopeptide (Lys-Gly) (interchain with G-Cter in SUMO2) cross-links involve residues lysine 170, lysine 185, and lysine 291. Serine 308 is subject to Phosphoserine. Lysine 317 participates in a covalent cross-link: Glycyl lysine isopeptide (Lys-Gly) (interchain with G-Cter in SUMO1); alternate. Residue lysine 317 forms a Glycyl lysine isopeptide (Lys-Gly) (interchain with G-Cter in SUMO2); alternate linkage. Residue lysine 377 forms a Glycyl lysine isopeptide (Lys-Gly) (interchain with G-Cter in SUMO2) linkage. Lysine 379 is covalently cross-linked (Glycyl lysine isopeptide (Lys-Gly) (interchain with G-Cter in SUMO1); alternate). Lysine 379 participates in a covalent cross-link: Glycyl lysine isopeptide (Lys-Gly) (interchain with G-Cter in SUMO2); alternate. 2 C2H2-type zinc fingers span residues histidine 387–histidine 409 and tyrosine 415–histidine 437. Residue lysine 441 forms a Glycyl lysine isopeptide (Lys-Gly) (interchain with G-Cter in SUMO2) linkage. Positions aspartate 471–glutamate 521 are disordered. Lysine 557 participates in a covalent cross-link: Glycyl lysine isopeptide (Lys-Gly) (interchain with G-Cter in SUMO2). 2 consecutive C2H2-type zinc fingers follow at residues asparagine 573–histidine 595 and phenylalanine 601–histidine 623. Residues lysine 604 and lysine 630 each participate in a glycyl lysine isopeptide (Lys-Gly) (interchain with G-Cter in SUMO2) cross-link. Residues histidine 633 to histidine 655 form a C2H2-type 6 zinc finger. 2 disordered regions span residues glutamate 682 to serine 716 and arginine 752 to proline 835. Acidic residues predominate over residues aspartate 693–cysteine 704. Polar residues-rich tracts occupy residues aspartate 707 to serine 716 and arginine 752 to leucine 761. Phosphoserine is present on residues serine 785 and serine 798. The span at serine 798–serine 809 shows a compositional bias: polar residues. A compositionally biased stretch (basic and acidic residues) spans arginine 810 to glycine 829. A Glycyl lysine isopeptide (Lys-Gly) (interchain with G-Cter in SUMO1); alternate cross-link involves residue lysine 846. Lysine 846 is covalently cross-linked (Glycyl lysine isopeptide (Lys-Gly) (interchain with G-Cter in SUMO2); alternate). A C2H2-type 7 zinc finger spans residues histidine 880 to histidine 902. Lysine 906 participates in a covalent cross-link: Glycyl lysine isopeptide (Lys-Gly) (interchain with G-Cter in SUMO2). A C2H2-type 8 zinc finger spans residues phenylalanine 908–histidine 930. Glycyl lysine isopeptide (Lys-Gly) (interchain with G-Cter in SUMO2) cross-links involve residues lysine 942 and lysine 957. The residue at position 1029 (serine 1029) is a Phosphoserine.

This sequence belongs to the sal C2H2-type zinc-finger protein family. In terms of assembly, interacts with POU5F1/OCT4. Interacts with NANOG. Interacts with BEND3. Interacts with NSD2 (via PHD-type zinc fingers 1, 2 and 3). Interacts with NRBP1. Post-translationally, sumoylation with both SUMO1 and SUMO2 regulates the stability, subcellular localization, transcriptional activity, and may reduce interaction with POU5F1/OCT4.

The protein localises to the cytoplasm. The protein resides in the nucleus. In terms of biological role, transcription factor with a key role in the maintenance and self-renewal of embryonic and hematopoietic stem cells. This Mus musculus (Mouse) protein is Sal-like protein 4 (Sall4).